Reading from the N-terminus, the 430-residue chain is Adenylosuccinate synthetase (430 aa).

GTP-binding positions include 12–18 (GDEGKGK) and 40–42 (GHT). Asp13 (proton acceptor) is an active-site residue. Mg(2+) is bound by residues Asp13 and Gly40. IMP contacts are provided by residues 13–16 (DEGK), 38–41 (NAGH), Thr128, Arg142, Gln223, Thr238, and Arg302. His41 acts as the Proton donor in catalysis. Substrate is bound at residue 298 to 304 (TTTGRPR). Residues Arg304, 330–332 (SID), and 412–414 (SVG) contribute to the GTP site.

Belongs to the adenylosuccinate synthetase family. In terms of assembly, homodimer. Mg(2+) is required as a cofactor.

The protein localises to the cytoplasm. The catalysed reaction is IMP + L-aspartate + GTP = N(6)-(1,2-dicarboxyethyl)-AMP + GDP + phosphate + 2 H(+). It functions in the pathway purine metabolism; AMP biosynthesis via de novo pathway; AMP from IMP: step 1/2. Its function is as follows. Plays an important role in the de novo pathway of purine nucleotide biosynthesis. Catalyzes the first committed step in the biosynthesis of AMP from IMP. The protein is Adenylosuccinate synthetase of Bacillus licheniformis (strain ATCC 14580 / DSM 13 / JCM 2505 / CCUG 7422 / NBRC 12200 / NCIMB 9375 / NCTC 10341 / NRRL NRS-1264 / Gibson 46).